We begin with the raw amino-acid sequence, 431 residues long: Intraflagellar transport protein 38 (431 aa).

Positions 177-218 (SAAVQQRIKNLAAECNTLQEEVTTNKREKAKLEEQITQKKQS) form a coiled coil. Residues 346–431 (INTNAEIPDD…EELDPDNIEF (86 aa)) are disordered. Over residues 352–370 (IPDDESYSYSYEEEEEEEQ) the composition is skewed to acidic residues. Over residues 384–405 (PETHSNGEKHRGLDELSHKSNE) the composition is skewed to basic and acidic residues. The span at 420–431 (GGEELDPDNIEF) shows a compositional bias: acidic residues.

This sequence belongs to the CLUAP1 family.

Its subcellular location is the cell projection. The protein resides in the cilium. It is found in the flagellum. The protein localises to the cytoplasm. It localises to the cytoskeleton. Its subcellular location is the flagellum axoneme. The protein resides in the flagellum basal body. Component of the intraflagellar transport complex B (IFT-B) involved in flagellar assembly. In Giardia intestinalis (strain ATCC 50803 / WB clone C6) (Giardia lamblia), this protein is Intraflagellar transport protein 38.